A 538-amino-acid polypeptide reads, in one-letter code: Hydroxylamine reductase (538 aa).

[4Fe-4S] cluster-binding residues include C3, C6, C15, and C21. H239, E263, C307, C394, C422, C447, E481, and K483 together coordinate hybrid [4Fe-2O-2S] cluster. C394 is modified (cysteine persulfide).

The protein belongs to the HCP family. The cofactor is [4Fe-4S] cluster. Hybrid [4Fe-2O-2S] cluster is required as a cofactor.

The protein resides in the cytoplasm. The enzyme catalyses A + NH4(+) + H2O = hydroxylamine + AH2 + H(+). Its function is as follows. Catalyzes the reduction of hydroxylamine to form NH(3) and H(2)O. This is Hydroxylamine reductase from Solidesulfovibrio magneticus (strain ATCC 700980 / DSM 13731 / RS-1) (Desulfovibrio magneticus).